The chain runs to 212 residues: uncharacterized protein (212 aa).

One can recognise an NERD domain in the interval 29–146 (KGKAGEKLVK…AAFHPKCSLK (118 aa)).

This is an uncharacterized protein from Bacillus anthracis.